Consider the following 139-residue polypeptide: D-ribose pyranase (139 aa).

Histidine 20 (proton donor) is an active-site residue. Substrate is bound by residues aspartate 28, histidine 106, and 128–130; that span reads YAN.

It belongs to the RbsD / FucU family. RbsD subfamily. As to quaternary structure, homodecamer.

It is found in the cytoplasm. It catalyses the reaction beta-D-ribopyranose = beta-D-ribofuranose. Its pathway is carbohydrate metabolism; D-ribose degradation; D-ribose 5-phosphate from beta-D-ribopyranose: step 1/2. In terms of biological role, catalyzes the interconversion of beta-pyran and beta-furan forms of D-ribose. The polypeptide is D-ribose pyranase (Vibrio vulnificus (strain CMCP6)).